The sequence spans 414 residues: UDP-N-acetylglucosamine 1-carboxyvinyltransferase (414 aa).

19-20 (KN) serves as a coordination point for phosphoenolpyruvate. R89 contacts UDP-N-acetyl-alpha-D-glucosamine. The active-site Proton donor is the C113. C113 bears the 2-(S-cysteinyl)pyruvic acid O-phosphothioketal mark. Residues 118–122 (RPIDL), D301, and V323 contribute to the UDP-N-acetyl-alpha-D-glucosamine site.

The protein belongs to the EPSP synthase family. MurA subfamily.

Its subcellular location is the cytoplasm. The catalysed reaction is phosphoenolpyruvate + UDP-N-acetyl-alpha-D-glucosamine = UDP-N-acetyl-3-O-(1-carboxyvinyl)-alpha-D-glucosamine + phosphate. The protein operates within cell wall biogenesis; peptidoglycan biosynthesis. In terms of biological role, cell wall formation. Adds enolpyruvyl to UDP-N-acetylglucosamine. This is UDP-N-acetylglucosamine 1-carboxyvinyltransferase from Bdellovibrio bacteriovorus (strain ATCC 15356 / DSM 50701 / NCIMB 9529 / HD100).